The sequence spans 224 residues: 7-cyano-7-deazaguanine synthase (224 aa).

Residue 10-20 coordinates ATP; the sequence is LSGGLDSATVV. Zn(2+)-binding residues include C189, C199, C202, and C205.

This sequence belongs to the QueC family. It depends on Zn(2+) as a cofactor.

The enzyme catalyses 7-carboxy-7-deazaguanine + NH4(+) + ATP = 7-cyano-7-deazaguanine + ADP + phosphate + H2O + H(+). Its pathway is purine metabolism; 7-cyano-7-deazaguanine biosynthesis. Its function is as follows. Catalyzes the ATP-dependent conversion of 7-carboxy-7-deazaguanine (CDG) to 7-cyano-7-deazaguanine (preQ(0)). This Pseudomonas putida (strain ATCC 47054 / DSM 6125 / CFBP 8728 / NCIMB 11950 / KT2440) protein is 7-cyano-7-deazaguanine synthase.